A 381-amino-acid polypeptide reads, in one-letter code: Pentatricopeptide repeat-containing protein 2, mitochondrial (381 aa).

The PPR repeat unit spans residues 159–193 (TSFNILMDMLFTKGKYERALQVLIEMKNQDVRFSK). Serine 375 carries the post-translational modification Phosphoserine.

Belongs to the PTCD2 family. As to expression, high expression in heart and liver and low expression in kidney, brain and testis.

The protein resides in the mitochondrion. In terms of biological role, involved in mitochondrial RNA maturation and mitochondrial respiratory chain function. This Mus musculus (Mouse) protein is Pentatricopeptide repeat-containing protein 2, mitochondrial (Ptcd2).